The following is a 371-amino-acid chain: 2-aminoethylphosphonate--pyruvate transaminase (371 aa).

Lysine 195 is subject to N6-(pyridoxal phosphate)lysine.

This sequence belongs to the class-V pyridoxal-phosphate-dependent aminotransferase family. PhnW subfamily. In terms of assembly, homodimer. Pyridoxal 5'-phosphate serves as cofactor.

It catalyses the reaction (2-aminoethyl)phosphonate + pyruvate = phosphonoacetaldehyde + L-alanine. Its function is as follows. Involved in phosphonate degradation. The chain is 2-aminoethylphosphonate--pyruvate transaminase from Pseudomonas aeruginosa (strain UCBPP-PA14).